Here is a 124-residue protein sequence, read N- to C-terminus: Small ribosomal subunit protein uS12 (124 aa).

The segment at 1–32 (MPTIQQLVRKGRKDKATKTKTPALKGSPQRRG) is disordered. 3-methylthioaspartic acid is present on D89. The segment at 105–124 (QGVRGRQQARSRYGAKKEKK) is disordered. A compositionally biased stretch (basic residues) spans 111–124 (QQARSRYGAKKEKK).

It belongs to the universal ribosomal protein uS12 family. Part of the 30S ribosomal subunit. Contacts proteins S8 and S17. May interact with IF1 in the 30S initiation complex.

Functionally, with S4 and S5 plays an important role in translational accuracy. In terms of biological role, interacts with and stabilizes bases of the 16S rRNA that are involved in tRNA selection in the A site and with the mRNA backbone. Located at the interface of the 30S and 50S subunits, it traverses the body of the 30S subunit contacting proteins on the other side and probably holding the rRNA structure together. The combined cluster of proteins S8, S12 and S17 appears to hold together the shoulder and platform of the 30S subunit. The polypeptide is Small ribosomal subunit protein uS12 (Beutenbergia cavernae (strain ATCC BAA-8 / DSM 12333 / CCUG 43141 / JCM 11478 / NBRC 16432 / NCIMB 13614 / HKI 0122)).